The sequence spans 164 residues: 6,7-dimethyl-8-ribityllumazine synthase (164 aa).

Residues F24, A58 to E60, and A82 to I84 each bind 5-amino-6-(D-ribitylamino)uracil. E87–T88 contributes to the (2S)-2-hydroxy-3-oxobutyl phosphate binding site. The active-site Proton donor is the H90. N115 is a binding site for 5-amino-6-(D-ribitylamino)uracil. R129 provides a ligand contact to (2S)-2-hydroxy-3-oxobutyl phosphate.

It belongs to the DMRL synthase family.

It catalyses the reaction (2S)-2-hydroxy-3-oxobutyl phosphate + 5-amino-6-(D-ribitylamino)uracil = 6,7-dimethyl-8-(1-D-ribityl)lumazine + phosphate + 2 H2O + H(+). It participates in cofactor biosynthesis; riboflavin biosynthesis; riboflavin from 2-hydroxy-3-oxobutyl phosphate and 5-amino-6-(D-ribitylamino)uracil: step 1/2. Catalyzes the formation of 6,7-dimethyl-8-ribityllumazine by condensation of 5-amino-6-(D-ribitylamino)uracil with 3,4-dihydroxy-2-butanone 4-phosphate. This is the penultimate step in the biosynthesis of riboflavin. The chain is 6,7-dimethyl-8-ribityllumazine synthase from Ralstonia nicotianae (strain ATCC BAA-1114 / GMI1000) (Ralstonia solanacearum).